The following is a 355-amino-acid chain: NADH dehydrogenase [ubiquinone] 1 alpha subcomplex subunit 10, mitochondrial (355 aa).

The N-terminal 35 residues, 1–35 (MALRLLRLVPASAPARGLAAGAQRVGRIHTSVHCK), are a transit peptide targeting the mitochondrion. Residue lysine 122 is modified to N6-acetyllysine; alternate. Lysine 122 carries the N6-succinyllysine; alternate modification. Phosphoserine; by PINK1 is present on serine 250. N6-succinyllysine is present on lysine 285.

This sequence belongs to the complex I NDUFA10 subunit family. In terms of assembly, complex I is composed of 45 different subunits. This a component of the hydrophobic protein fraction. FAD serves as cofactor. Post-translationally, phosphorylation at Ser-250 by PINK1 is required for the binding and/or reduction of the complex I substrate ubiquinone. Acetylation of Lys-242 is observed in liver mitochondria from fasted mice but not from fed mice.

Its subcellular location is the mitochondrion matrix. Accessory subunit of the mitochondrial membrane respiratory chain NADH dehydrogenase (Complex I), that is believed not to be involved in catalysis. Complex I functions in the transfer of electrons from NADH to the respiratory chain. The immediate electron acceptor for the enzyme is believed to be ubiquinone. The polypeptide is NADH dehydrogenase [ubiquinone] 1 alpha subcomplex subunit 10, mitochondrial (Ndufa10) (Mus musculus (Mouse)).